We begin with the raw amino-acid sequence, 160 residues long: Cytochrome b6-f complex subunit 4 (160 aa).

Transmembrane regions (helical) follow at residues 36 to 56, 95 to 115, and 131 to 151; these read LLYIFPVVILGTIACNVGLAV, LLGVLLMVSVPAGLLTVPFLE, and TVFLIGTAVALWLGIGATLPI.

The protein belongs to the cytochrome b family. PetD subfamily. The 4 large subunits of the cytochrome b6-f complex are cytochrome b6, subunit IV (17 kDa polypeptide, petD), cytochrome f and the Rieske protein, while the 4 small subunits are petG, petL, petM and petN. The complex functions as a dimer.

It is found in the plastid. Its subcellular location is the chloroplast thylakoid membrane. Functionally, component of the cytochrome b6-f complex, which mediates electron transfer between photosystem II (PSII) and photosystem I (PSI), cyclic electron flow around PSI, and state transitions. This is Cytochrome b6-f complex subunit 4 from Coffea arabica (Arabian coffee).